Reading from the N-terminus, the 295-residue chain is Putative sugar uptake protein YxfA (295 aa).

The next 10 membrane-spanning stretches (helical) occupy residues 4–26 (VLLA…KFGG), 33–50 (LGMT…FLFR), 54–72 (LTWQ…WAIG), 85–107 (VSVA…GVFA), 117–135 (FILG…YFSA), 156–178 (ALTY…AVLW), 188–206 (IILP…MGRF), 213–235 (YVYQ…LMAA), 241–263 (AIAF…LFLG), and 270–291 (ELVY…LAIV).

Belongs to the GRP transporter (TC 2.A.7.5) family.

It is found in the cell membrane. This is Putative sugar uptake protein YxfA (yxfA) from Lactococcus lactis subsp. lactis (strain IL1403) (Streptococcus lactis).